Here is a 436-residue protein sequence, read N- to C-terminus: UDP-N-acetylmuramate--L-alanine ligase (436 aa).

G110–S116 is an ATP binding site.

It belongs to the MurCDEF family.

The protein resides in the cytoplasm. It carries out the reaction UDP-N-acetyl-alpha-D-muramate + L-alanine + ATP = UDP-N-acetyl-alpha-D-muramoyl-L-alanine + ADP + phosphate + H(+). It functions in the pathway cell wall biogenesis; peptidoglycan biosynthesis. Functionally, cell wall formation. This Lacticaseibacillus paracasei (strain ATCC 334 / BCRC 17002 / CCUG 31169 / CIP 107868 / KCTC 3260 / NRRL B-441) (Lactobacillus paracasei) protein is UDP-N-acetylmuramate--L-alanine ligase.